A 497-amino-acid chain; its full sequence is NADH-ubiquinone oxidoreductase chain 4 (497 aa).

14 consecutive transmembrane segments (helical) span residues 3–23, 42–62, 94–114, 122–142, 144–164, 178–198, 220–240, 250–270, 276–296, 313–333, 340–360, 374–394, 418–438, and 463–483; these read FLLY…LLII, LFFS…SDNI, ISLL…LISW, NSFI…FCVL, LVFF…LIGV, LFFY…VIYS, ILWA…PFHI, PTVG…YGLL, IFCD…LLGI, IAYA…TSNI, VFLM…IGCV, GLVS…LSNI, FAAL…IWLY, and VVGF…SYII.

The protein belongs to the complex I subunit 4 family.

Its subcellular location is the mitochondrion membrane. The enzyme catalyses a ubiquinone + NADH + 5 H(+)(in) = a ubiquinol + NAD(+) + 4 H(+)(out). In terms of biological role, core subunit of the mitochondrial membrane respiratory chain NADH dehydrogenase (Complex I) that is believed to belong to the minimal assembly required for catalysis. Complex I functions in the transfer of electrons from NADH to the respiratory chain. The immediate electron acceptor for the enzyme is believed to be ubiquinone. This is NADH-ubiquinone oxidoreductase chain 4 (ND4) from Acanthamoeba castellanii (Amoeba).